Consider the following 189-residue polypeptide: MTEKNEEVVEDKNISDQTDENLTEEIESEADDLQVEPDPKQAEIDKLTEQVNNLEEKLLRSQAEIQNIQQRNARELQNVRKYDGQKLASAVLPAVDNLERALQVEANDEVSKQIKTGVEMTLKTLNQALTDNGITSTGEIGESFDPTKHQAIQSVESDEVESDQIAQVLQKGYILQDRVIRPAMVAVAK.

The span at 1–14 (MTEKNEEVVEDKNI) shows a compositional bias: basic and acidic residues. Positions 1–38 (MTEKNEEVVEDKNISDQTDENLTEEIESEADDLQVEPD) are disordered. Residues 17–35 (QTDENLTEEIESEADDLQV) show a composition bias toward acidic residues.

The protein belongs to the GrpE family. As to quaternary structure, homodimer.

The protein resides in the cytoplasm. In terms of biological role, participates actively in the response to hyperosmotic and heat shock by preventing the aggregation of stress-denatured proteins, in association with DnaK and GrpE. It is the nucleotide exchange factor for DnaK and may function as a thermosensor. Unfolded proteins bind initially to DnaJ; upon interaction with the DnaJ-bound protein, DnaK hydrolyzes its bound ATP, resulting in the formation of a stable complex. GrpE releases ADP from DnaK; ATP binding to DnaK triggers the release of the substrate protein, thus completing the reaction cycle. Several rounds of ATP-dependent interactions between DnaJ, DnaK and GrpE are required for fully efficient folding. The protein is Protein GrpE of Leuconostoc mesenteroides subsp. mesenteroides (strain ATCC 8293 / DSM 20343 / BCRC 11652 / CCM 1803 / JCM 6124 / NCDO 523 / NBRC 100496 / NCIMB 8023 / NCTC 12954 / NRRL B-1118 / 37Y).